A 468-amino-acid polypeptide reads, in one-letter code: Interstitial collagenase (468 aa).

The first 18 residues, 1-18 (MPGLPLLLLLLWGVGSHG), serve as a signal peptide directing secretion. The propeptide at 19–98 (FPAASETQEQ…PRCGVPDVAQ (80 aa)) is activation peptide. Residues 89-96 (PRCGVPDV) carry the Cysteine switch motif. Residue cysteine 91 coordinates Zn(2+). The N-linked (GlcNAc...) asparagine glycan is linked to asparagine 119. Positions 123 and 157 each coordinate Ca(2+). Positions 167 and 169 each coordinate Zn(2+). The Ca(2+) site is built by aspartate 174, glycine 175, glutamate 177, and glutamine 179. Histidine 182 is a Zn(2+) binding site. Glycine 189, glycine 191, and aspartate 193 together coordinate Ca(2+). Histidine 195 lines the Zn(2+) pocket. Ca(2+)-binding residues include aspartate 197, glutamate 198, and aspartate 200. A Zn(2+)-binding site is contributed by histidine 217. Glutamate 218 is an active-site residue. Histidine 221 and histidine 227 together coordinate Zn(2+). Phosphothreonine is present on threonine 273. 4 Hemopexin repeats span residues 274-323 (PKVC…WPHL), 324-370 (PNGL…FGFP), 373-421 (VNHI…FPGI), and 422-465 (GNKV…WFNC). A disulfide bridge links cysteine 277 with cysteine 465. The Ca(2+) site is built by aspartate 284 and glutamine 328. At tyrosine 359 the chain carries Phosphotyrosine; by PKDCC. Residues aspartate 377 and aspartate 426 each coordinate Ca(2+).

It belongs to the peptidase M10A family. Ca(2+) is required as a cofactor. Zn(2+) serves as cofactor. Tyrosine phosphorylated in platelets by PKDCC/VLK.

The protein resides in the secreted. It localises to the extracellular space. Its subcellular location is the extracellular matrix. It carries out the reaction Cleavage of the triple helix of collagen at about three-quarters of the length of the molecule from the N-terminus, at 775-Gly-|-Ile-776 in the alpha1(I) chain. Cleaves synthetic substrates and alpha-macroglobulins at bonds where P1' is a hydrophobic residue.. Its activity is regulated as follows. Can be activated without removal of the activation peptide. Its function is as follows. Cleaves collagens of types I, II, and III at one site in the helical domain. Also cleaves collagens of types VII and X. This is Interstitial collagenase (MMP1) from Oryctolagus cuniculus (Rabbit).